We begin with the raw amino-acid sequence, 358 residues long: Mesaconyl-CoA hydratase (358 aa).

The MaoC-like domain occupies 44-148 (AHDPGLRLTH…TSSSRPQYGI (105 aa)).

It belongs to the enoyl-CoA hydratase/isomerase family.

It carries out the reaction (2R,3S)-beta-methylmalyl-CoA = 2-methylfumaryl-CoA + H2O. Involved in the methylaspartate cycle. Catalyzes the reversible hydration of mesaconyl-CoA (2-methylfumaryl-CoA) to yield beta-methylmalyl-CoA ((2R,3S)-beta-methylmalyl-CoA). This Haloarcula marismortui (strain ATCC 43049 / DSM 3752 / JCM 8966 / VKM B-1809) (Halobacterium marismortui) protein is Mesaconyl-CoA hydratase.